Reading from the N-terminus, the 339-residue chain is Protein-arginine kinase (339 aa).

In terms of domain architecture, Phosphagen kinase C-terminal spans 14 to 242 (IVINSNISLS…LNVISEEKKF (229 aa)). ATP is bound by residues 17–21 (NSNIS), 164–168 (RASVN), and 195–200 (KGLYEE).

Belongs to the ATP:guanido phosphotransferase family.

It carries out the reaction L-arginyl-[protein] + ATP = N(omega)-phospho-L-arginyl-[protein] + ADP + H(+). Catalyzes the specific phosphorylation of arginine residues in proteins. In Clostridium botulinum (strain Eklund 17B / Type B), this protein is Protein-arginine kinase.